The sequence spans 661 residues: PAN2-PAN3 deadenylation complex subunit PAN3 (661 aa).

2 disordered regions span residues 1–26 and 53–130; these read MASAGKPALDDSRRGTGSPKIKAREN and DPHK…LRQD. The C3H1-type zinc-finger motif lies at 26 to 55; sequence NAKDTLCRNITIYGRCRYEDKGCAFNHDPH. A compositionally biased stretch (low complexity) spans 75 to 102; the sequence is SFTPSLLSSNGSSPTSTPATTKKMTTIS. Over residues 115–130 the composition is skewed to polar residues; sequence SVVSRSNASTPGLRQD. The interval 263 to 524 is pseudokinase domain; it reads QTLPNTQLPA…NIDIFITGIS (262 aa). ATP contacts are provided by residues R315, 364–371, and 424–425; these read DYHPLSKT and SK. A coiled-coil region spans residues 525 to 563; the sequence is SQLMSTFDSALHLDDQLTSDLSRELENGRLVRLMTKLNF. The interval 564–661 is knob domain; the sequence is VNERPEYEHD…ALMKPARRMH (98 aa).

The protein belongs to the protein kinase superfamily. PAN3 family. Homodimer. Forms a heterotrimer with a catalytic subunit pan2 to form the poly(A)-nuclease (PAN) deadenylation complex. Interacts (via PAM-2 motif) with poly(A)-binding protein pab1 (via PABC domain), conferring substrate specificity of the enzyme complex.

The protein resides in the cytoplasm. Functionally, regulatory subunit of the poly(A)-nuclease (PAN) deadenylation complex, one of two cytoplasmic mRNA deadenylases involved in mRNA turnover. PAN specifically shortens poly(A) tails of RNA and the activity is stimulated by poly(A)-binding protein pab1. PAN deadenylation is followed by rapid degradation of the shortened mRNA tails by the CCR4-NOT complex. Deadenylated mRNAs are then degraded by two alternative mechanisms, namely exosome-mediated 3'-5' exonucleolytic degradation, or deadenylation-dependent mRNA decaping and subsequent 5'-3' exonucleolytic degradation by xrn1. May also be involved in post-transcriptional maturation of mRNA poly(A) tails. pan3 acts as a positive regulator for PAN activity, recruiting the catalytic subunit pan2 to mRNA via its interaction with RNA and with pab1. In Neosartorya fischeri (strain ATCC 1020 / DSM 3700 / CBS 544.65 / FGSC A1164 / JCM 1740 / NRRL 181 / WB 181) (Aspergillus fischerianus), this protein is PAN2-PAN3 deadenylation complex subunit PAN3.